We begin with the raw amino-acid sequence, 529 residues long: uncharacterized protein (529 aa).

Residues 1-20 (MYFLILILVLLLIMVAAATA) form the signal peptide.

This is an uncharacterized protein from Orgyia pseudotsugata multicapsid polyhedrosis virus (OpMNPV).